We begin with the raw amino-acid sequence, 86 residues long: Anti-adapter protein IraP (86 aa).

Residues 1–36 (MKNLIAELLLKLAQKEEESKELCAQVEALEIIVTAM) are a coiled coil.

The protein belongs to the IraP family. In terms of assembly, interacts with RssB.

The protein resides in the cytoplasm. In terms of biological role, inhibits RpoS proteolysis by regulating RssB activity, thereby increasing the stability of the sigma stress factor RpoS especially during phosphate starvation, but also in stationary phase and during nitrogen starvation. Its effect on RpoS stability is due to its interaction with RssB, which probably blocks the interaction of RssB with RpoS, and the consequent delivery of the RssB-RpoS complex to the ClpXP protein degradation pathway. This Shigella boydii serotype 4 (strain Sb227) protein is Anti-adapter protein IraP.